A 300-amino-acid polypeptide reads, in one-letter code: Ribosomal protein bS6--L-glutamate ligase (300 aa).

Positions 104–287 (MQLLARQGID…IAGKMIRWIE (184 aa)) constitute an ATP-grasp domain. ATP contacts are provided by residues Lys-141, 178 to 179 (EY), Asp-187, and 211 to 213 (RSN). Residues Asp-248, Glu-260, and Asn-262 each contribute to the Mg(2+) site. Mn(2+)-binding residues include Asp-248, Glu-260, and Asn-262.

Belongs to the RimK family. It depends on Mg(2+) as a cofactor. Requires Mn(2+) as cofactor.

In terms of biological role, an L-glutamate ligase that catalyzes the ATP-dependent post-translational addition of glutamate residues to the C-terminus of ribosomal protein bS6 (RpsF). Is also able to catalyze the synthesis of poly-alpha-glutamate in vitro, via ATP hydrolysis from unprotected glutamate as substrate. The number of glutamate residues added to either RpsF or to poly-alpha-glutamate changes with pH. This Escherichia coli O7:K1 (strain IAI39 / ExPEC) protein is Ribosomal protein bS6--L-glutamate ligase.